A 266-amino-acid polypeptide reads, in one-letter code: MTAISDCFAALRSQGRCALIPFLTAGDPDLETTRQALLALDREGADLIELGVPYSDPLADGPVIQAAATRALQAGTRLDDVLALLKDVRSQIKAPIVLFTYCNPILNRGFEAFLDQIAAAGANGLVVPDLPLEESQRLSEVAAERGIDLILLIAPTSSADRIAAISKQARGFIYLVSVTGVTGMRQGMQSRVADLLQEIRQGTDKPIGVGFGISGAEQARQVRDWGADGVIVGSAFVNRLQEQGVEGVATLCRELRQAIDRQPVLS.

Residues Glu49 and Asp60 each act as proton acceptor in the active site.

The protein belongs to the TrpA family. Tetramer of two alpha and two beta chains.

It catalyses the reaction (1S,2R)-1-C-(indol-3-yl)glycerol 3-phosphate + L-serine = D-glyceraldehyde 3-phosphate + L-tryptophan + H2O. It participates in amino-acid biosynthesis; L-tryptophan biosynthesis; L-tryptophan from chorismate: step 5/5. The alpha subunit is responsible for the aldol cleavage of indoleglycerol phosphate to indole and glyceraldehyde 3-phosphate. The sequence is that of Tryptophan synthase alpha chain from Synechococcus elongatus (strain ATCC 33912 / PCC 7942 / FACHB-805) (Anacystis nidulans R2).